The sequence spans 509 residues: UDP-N-acetylmuramoylalanine--D-glutamate ligase (509 aa).

116–122 (GTNGKST) is a binding site for ATP.

It belongs to the MurCDEF family.

It localises to the cytoplasm. The catalysed reaction is UDP-N-acetyl-alpha-D-muramoyl-L-alanine + D-glutamate + ATP = UDP-N-acetyl-alpha-D-muramoyl-L-alanyl-D-glutamate + ADP + phosphate + H(+). It functions in the pathway cell wall biogenesis; peptidoglycan biosynthesis. Its function is as follows. Cell wall formation. Catalyzes the addition of glutamate to the nucleotide precursor UDP-N-acetylmuramoyl-L-alanine (UMA). The sequence is that of UDP-N-acetylmuramoylalanine--D-glutamate ligase from Wolbachia pipientis wMel.